The sequence spans 170 residues: UPF0201 protein MJ1564 (170 aa).

The segment covering N133–E148 has biased composition (acidic residues). The segment at N133–D170 is disordered. Residues I149 to V163 show a composition bias toward basic and acidic residues.

This sequence belongs to the UPF0201 family.

This Methanocaldococcus jannaschii (strain ATCC 43067 / DSM 2661 / JAL-1 / JCM 10045 / NBRC 100440) (Methanococcus jannaschii) protein is UPF0201 protein MJ1564.